Consider the following 446-residue polypeptide: Packaging protein 1 (446 aa).

The disordered stretch occupies residues 1–72 (MEEKAGLRHL…SQVSKSKKQR (72 aa)). Residues 10–21 (LQNQQNEPSQDP) are compositionally biased toward polar residues. Basic and acidic residues predominate over residues 32–43 (HSDRNHLNKEAE). 170–177 (GPTGCGKS) contributes to the ATP binding site. The interval 439–446 (RYYHSKKK) is DNA-binding.

Belongs to the adenoviridae packaging protein 1 family. As to quaternary structure, homodimer. Part of a genome packaging complex composed of packaging proteins 1, 2 and 3; this complex specifically binds to the packaging sequence on the left end of viral genomic DNA and performs packaging of the viral genome. Interacts with protein 33K.

The protein localises to the virion. The protein resides in the host nucleus. Its subcellular location is the host nucleoplasm. It localises to the host nucleolus. Its function is as follows. Component of the packaging machinery which encapsidates the viral DNA into preformed capsids and transcriptional activator of the viral major late promoter (MLP). Binds, along with packaging proteins 2 and 3, to the specific packaging sequence on the left end of viral genomic DNA and displays ATPase activity thereby providing the power stroke of the packaging machinery. The activity of packaging protein IVa2 is stimulated by protein 33K which acts as a terminase. May be the protein that pumps DNA into the capsid powered by ATP hydrolysis. Specifically binds to the 5'-CG-3' nucleotides of the repeats making up the packaging sequence. Component of the DEF-A and DEF-B transcription factors that bind downstream elements of the major late promoter (MLP), and stimulate transcription from the MLP after initiation of viral DNA replication. DEF-A is a heterodimer packaging proteins 1 and 2 and DEF-B is a homodimer of packaging protein 1. This chain is Packaging protein 1, found in Canine adenovirus serotype 1 (strain CLL) (CAdV-1).